A 509-amino-acid polypeptide reads, in one-letter code: Maturase K (509 aa).

Belongs to the intron maturase 2 family. MatK subfamily.

The protein resides in the plastid. It localises to the chloroplast. Its function is as follows. Usually encoded in the trnK tRNA gene intron. Probably assists in splicing its own and other chloroplast group II introns. The chain is Maturase K from Otacanthus azureus (Brazilian snapdragon).